A 734-amino-acid chain; its full sequence is Photosystem I P700 chlorophyll a apoprotein A2 (734 aa).

The next 8 helical transmembrane spans lie at 46-69 (IFASHFGQLAIIFLWTSGNLFHVA), 135-158 (LYTGALFLLFLSALSLIGGWLHLQ), 175-199 (LNHHLSGLFGVSSLAWTGHLVHVAI), 273-291 (MAHHHLAIAILFLIAGHMY), 330-353 (IHFQLGLALASLGVITSLVAQHMY), 369-395 (AALYTHHQYIAGFIMTGAFAHGAIFFI), 417-439 (AIISQLSWASLFLGFHTLGLYVH), and 517-535 (FLVHHAIALGLHTTTLILV). Residues cysteine 559 and cysteine 568 each contribute to the [4Fe-4S] cluster site. 2 consecutive transmembrane segments (helical) span residues 575 to 596 (AFYLAVFWMLNTIGWVTFYWHW) and 643 to 665 (LSVWAWMFLFGHLVWATGFMFLI). Residues histidine 654, methionine 662, and tyrosine 670 each contribute to the chlorophyll a site. Tryptophan 671 lines the phylloquinone pocket. The helical transmembrane segment at 707–727 (LVGLAHFSVGYIFTYAAFLIA) threads the bilayer.

It belongs to the PsaA/PsaB family. In terms of assembly, the PsaA/B heterodimer binds the P700 chlorophyll special pair and subsequent electron acceptors. PSI consists of a core antenna complex that captures photons, and an electron transfer chain that converts photonic excitation into a charge separation. The eukaryotic PSI reaction center is composed of at least 11 subunits. The cofactor is P700 is a chlorophyll a/chlorophyll a' dimer, A0 is one or more chlorophyll a, A1 is one or both phylloquinones and FX is a shared 4Fe-4S iron-sulfur center..

Its subcellular location is the plastid. The protein localises to the chloroplast thylakoid membrane. The catalysed reaction is reduced [plastocyanin] + hnu + oxidized [2Fe-2S]-[ferredoxin] = oxidized [plastocyanin] + reduced [2Fe-2S]-[ferredoxin]. PsaA and PsaB bind P700, the primary electron donor of photosystem I (PSI), as well as the electron acceptors A0, A1 and FX. PSI is a plastocyanin-ferredoxin oxidoreductase, converting photonic excitation into a charge separation, which transfers an electron from the donor P700 chlorophyll pair to the spectroscopically characterized acceptors A0, A1, FX, FA and FB in turn. Oxidized P700 is reduced on the lumenal side of the thylakoid membrane by plastocyanin. This chain is Photosystem I P700 chlorophyll a apoprotein A2, found in Draba nemorosa (Woodland whitlowgrass).